Reading from the N-terminus, the 256-residue chain is Ribosomal RNA small subunit methyltransferase A (256 aa).

Residues His12, Leu14, Gly39, Glu60, Asp81, and Asn103 each contribute to the S-adenosyl-L-methionine site.

Belongs to the class I-like SAM-binding methyltransferase superfamily. rRNA adenine N(6)-methyltransferase family. RsmA subfamily.

The protein localises to the cytoplasm. The catalysed reaction is adenosine(1518)/adenosine(1519) in 16S rRNA + 4 S-adenosyl-L-methionine = N(6)-dimethyladenosine(1518)/N(6)-dimethyladenosine(1519) in 16S rRNA + 4 S-adenosyl-L-homocysteine + 4 H(+). In terms of biological role, specifically dimethylates two adjacent adenosines (A1518 and A1519) in the loop of a conserved hairpin near the 3'-end of 16S rRNA in the 30S particle. May play a critical role in biogenesis of 30S subunits. This Methylibium petroleiphilum (strain ATCC BAA-1232 / LMG 22953 / PM1) protein is Ribosomal RNA small subunit methyltransferase A.